A 223-amino-acid polypeptide reads, in one-letter code: NAD(P)H-hydrate epimerase (223 aa).

Residues 9–209 (MQKIDTYTVN…DIGLLTPPDF (201 aa)) form the YjeF N-terminal domain. Position 57–61 (57–61 (NNGAD)) interacts with (6S)-NADPHX. K(+)-binding residues include Asn-58 and Asp-119. Residues 123–129 (GTGLNNL) and Asp-152 each bind (6S)-NADPHX. Thr-155 provides a ligand contact to K(+).

Belongs to the NnrE/AIBP family. Requires K(+) as cofactor.

It carries out the reaction (6R)-NADHX = (6S)-NADHX. It catalyses the reaction (6R)-NADPHX = (6S)-NADPHX. In terms of biological role, catalyzes the epimerization of the S- and R-forms of NAD(P)HX, a damaged form of NAD(P)H that is a result of enzymatic or heat-dependent hydration. This is a prerequisite for the S-specific NAD(P)H-hydrate dehydratase to allow the repair of both epimers of NAD(P)HX. This is NAD(P)H-hydrate epimerase from Leuconostoc gelidum subsp. gasicomitatum (strain DSM 15947 / CCUG 46042 / CECT 5767 / JCM 12535 / LMG 18811 / NBRC 113245 / TB1-10) (Leuconostoc gasicomitatum).